A 316-amino-acid chain; its full sequence is Methionyl-tRNA formyltransferase (316 aa).

Residue 117 to 120 participates in (6S)-5,6,7,8-tetrahydrofolate binding; sequence SLLP.

Belongs to the Fmt family.

It carries out the reaction L-methionyl-tRNA(fMet) + (6R)-10-formyltetrahydrofolate = N-formyl-L-methionyl-tRNA(fMet) + (6S)-5,6,7,8-tetrahydrofolate + H(+). Attaches a formyl group to the free amino group of methionyl-tRNA(fMet). The formyl group appears to play a dual role in the initiator identity of N-formylmethionyl-tRNA by promoting its recognition by IF2 and preventing the misappropriation of this tRNA by the elongation apparatus. This chain is Methionyl-tRNA formyltransferase, found in Janthinobacterium sp. (strain Marseille) (Minibacterium massiliensis).